The chain runs to 329 residues: GTP 3',8-cyclase (329 aa).

Residues 8–234 (AFARKFYYLR…QLRQRSDGPA (227 aa)) form the Radical SAM core domain. A GTP-binding site is contributed by arginine 17. [4Fe-4S] cluster-binding residues include cysteine 24 and cysteine 28. Tyrosine 30 is a binding site for S-adenosyl-L-methionine. Position 31 (cysteine 31) interacts with [4Fe-4S] cluster. Arginine 68 is a binding site for GTP. An S-adenosyl-L-methionine-binding site is contributed by glycine 72. Threonine 99 is a GTP binding site. Residue serine 123 participates in S-adenosyl-L-methionine binding. Lysine 160 contributes to the GTP binding site. S-adenosyl-L-methionine is bound at residue methionine 194. The [4Fe-4S] cluster site is built by cysteine 257 and cysteine 260. 262–264 (RLR) contacts GTP. Cysteine 274 provides a ligand contact to [4Fe-4S] cluster.

This sequence belongs to the radical SAM superfamily. MoaA family. As to quaternary structure, monomer and homodimer. [4Fe-4S] cluster serves as cofactor.

The enzyme catalyses GTP + AH2 + S-adenosyl-L-methionine = (8S)-3',8-cyclo-7,8-dihydroguanosine 5'-triphosphate + 5'-deoxyadenosine + L-methionine + A + H(+). It functions in the pathway cofactor biosynthesis; molybdopterin biosynthesis. In terms of biological role, catalyzes the cyclization of GTP to (8S)-3',8-cyclo-7,8-dihydroguanosine 5'-triphosphate. The sequence is that of GTP 3',8-cyclase from Escherichia coli O45:K1 (strain S88 / ExPEC).